The sequence spans 186 residues: ATP-dependent protease subunit HslV (186 aa).

Thr14 is a catalytic residue. Ala168, Cys171, and Thr174 together coordinate Na(+).

It belongs to the peptidase T1B family. HslV subfamily. A double ring-shaped homohexamer of HslV is capped on each side by a ring-shaped HslU homohexamer. The assembly of the HslU/HslV complex is dependent on binding of ATP.

It localises to the cytoplasm. It catalyses the reaction ATP-dependent cleavage of peptide bonds with broad specificity.. With respect to regulation, allosterically activated by HslU binding. Protease subunit of a proteasome-like degradation complex believed to be a general protein degrading machinery. The chain is ATP-dependent protease subunit HslV from Bradyrhizobium sp. (strain BTAi1 / ATCC BAA-1182).